Reading from the N-terminus, the 281-residue chain is NAD kinase (281 aa).

Asp-61 serves as the catalytic Proton acceptor. NAD(+) is bound by residues 61 to 62 (DG), 134 to 135 (ND), Arg-145, Asp-164, 175 to 180 (TAYSLS), and Gln-234.

It belongs to the NAD kinase family. It depends on a divalent metal cation as a cofactor.

It localises to the cytoplasm. It carries out the reaction NAD(+) + ATP = ADP + NADP(+) + H(+). Involved in the regulation of the intracellular balance of NAD and NADP, and is a key enzyme in the biosynthesis of NADP. Catalyzes specifically the phosphorylation on 2'-hydroxyl of the adenosine moiety of NAD to yield NADP. In Clostridium botulinum (strain Kyoto / Type A2), this protein is NAD kinase.